The sequence spans 278 residues: Undecaprenyl-diphosphatase 1 (278 aa).

Transmembrane regions (helical) follow at residues 45-65 (AVIG…LVYF), 95-115 (WWVI…KPLI), 119-139 (LASL…MWWA), 191-211 (VAAT…AGLY), 225-245 (PLAV…AWLL), and 256-276 (FVVY…TGVL).

It belongs to the UppP family.

It localises to the cell membrane. It carries out the reaction di-trans,octa-cis-undecaprenyl diphosphate + H2O = di-trans,octa-cis-undecaprenyl phosphate + phosphate + H(+). Functionally, catalyzes the dephosphorylation of undecaprenyl diphosphate (UPP). Confers resistance to bacitracin. The protein is Undecaprenyl-diphosphatase 1 of Streptomyces coelicolor (strain ATCC BAA-471 / A3(2) / M145).